The primary structure comprises 220 residues: UPF0319 protein YccT (220 aa).

Residues 1-20 form the signal peptide; it reads MKTGALTTFLALCLPVTVFA.

The protein belongs to the UPF0319 family.

The chain is UPF0319 protein YccT from Salmonella schwarzengrund (strain CVM19633).